The primary structure comprises 122 residues: Large ribosomal subunit protein uL14 (122 aa).

This sequence belongs to the universal ribosomal protein uL14 family. As to quaternary structure, part of the 50S ribosomal subunit. Forms a cluster with proteins L3 and L19. In the 70S ribosome, L14 and L19 interact and together make contacts with the 16S rRNA in bridges B5 and B8.

In terms of biological role, binds to 23S rRNA. Forms part of two intersubunit bridges in the 70S ribosome. This is Large ribosomal subunit protein uL14 from Shewanella baltica (strain OS223).